The sequence spans 949 residues: General transcription factor II-I repeat domain-containing protein 2A (949 aa).

2 GTF2I-like repeats span residues Q98 to G192 and L323 to G417.

Belongs to the TFII-I family. As to expression, ubiquitous.

The protein resides in the nucleus. The chain is General transcription factor II-I repeat domain-containing protein 2A (GTF2IRD2) from Homo sapiens (Human).